The following is an 838-amino-acid chain: Multiphosphoryl transfer protein (838 aa).

One can recognise a PTS EIIA type-2 domain in the interval 7–147; it reads APVTPDLVRL…AVIVAALTGD (141 aa). Histidine 67 (tele-phosphohistidine intermediate; for EIIA activity) is an active-site residue. Phosphohistidine; by HPr is present on histidine 67. One can recognise an HPr domain in the interval 161–253; it reads AERFEWTIAY…LTAQEKADAE (93 aa). The active-site Pros-phosphohistidine intermediate; for HPr activity is histidine 175. Histidine 175 carries the post-translational modification Phosphohistidine; by EI. Residues 274 to 838 are PTS EI; sequence AIVGIGASPG…ALEAQREGQA (565 aa). Histidine 460 functions as the Tele-phosphohistidine intermediate; for PTS EI activity in the catalytic mechanism. The residue at position 460 (histidine 460) is a Phosphohistidine; by autocatalysis. Phosphoenolpyruvate-binding residues include arginine 567 and arginine 603. Residues glutamate 697 and aspartate 721 each coordinate Mg(2+). Phosphoenolpyruvate-binding positions include 720-721 and arginine 731; that span reads ND. Cysteine 768 serves as the catalytic Proton donor.

The protein belongs to the PEP-utilizing enzyme family. It depends on Mg(2+) as a cofactor.

Its subcellular location is the cytoplasm. The enzyme catalyses L-histidyl-[protein] + phosphoenolpyruvate = N(pros)-phospho-L-histidyl-[protein] + pyruvate. Functionally, the phosphoenolpyruvate-dependent sugar phosphotransferase system (sugar PTS), a major carbohydrate active transport system, catalyzes the phosphorylation of incoming sugar substrates concomitantly with their translocation across the cell membrane. The enzyme II FruAB PTS system is involved in fructose transport. This is Multiphosphoryl transfer protein from Xanthomonas campestris pv. campestris (strain ATCC 33913 / DSM 3586 / NCPPB 528 / LMG 568 / P 25).